A 392-amino-acid polypeptide reads, in one-letter code: Phosphoglycerate kinase (392 aa).

Substrate-binding positions include 21 to 23, arginine 36, 59 to 62, arginine 114, and arginine 147; these read DMN and HLGR. Residues lysine 198, glutamate 320, and 346 to 349 each bind ATP; that span reads GGDT.

This sequence belongs to the phosphoglycerate kinase family. As to quaternary structure, monomer.

Its subcellular location is the cytoplasm. It catalyses the reaction (2R)-3-phosphoglycerate + ATP = (2R)-3-phospho-glyceroyl phosphate + ADP. It participates in carbohydrate degradation; glycolysis; pyruvate from D-glyceraldehyde 3-phosphate: step 2/5. This is Phosphoglycerate kinase from Neisseria meningitidis serogroup A / serotype 4A (strain DSM 15465 / Z2491).